The chain runs to 344 residues: Serine proteinase inhibitor 2 (344 aa).

Belongs to the serpin family. Poxviruses subfamily.

It is found in the host cytoplasm. Its function is as follows. Viral serpin that inhibits both cysteine and serine proteinases involved in the regulation of host inflammatory and apoptosis processes. Major anti-apoptotic protein which inhibits both intrinsic and extrinsic pathways and strongly cleaves host CASP1 and CASP8 but is a rather poor inhibitor of host CASP3. Prevents the proteolytic activity of host interleukin-1-beta converting enzyme (ICE) and ICE-like enzymes. Can also block apoptosis through host tumor necrosis factor (TNF) receptor. The inhibition of host ICE is an example of a 'cross-class' interaction, in which a serpin inhibits a non-serine proteinase. Also inhibits granzyme B. The protein is Serine proteinase inhibitor 2 (OPG199) of Cynomys gunnisoni (Gunnison's prairie dog).